Consider the following 207-residue polypeptide: 3-isopropylmalate dehydratase small subunit (207 aa).

It belongs to the LeuD family. LeuD type 1 subfamily. In terms of assembly, heterodimer of LeuC and LeuD.

It catalyses the reaction (2R,3S)-3-isopropylmalate = (2S)-2-isopropylmalate. It functions in the pathway amino-acid biosynthesis; L-leucine biosynthesis; L-leucine from 3-methyl-2-oxobutanoate: step 2/4. Its function is as follows. Catalyzes the isomerization between 2-isopropylmalate and 3-isopropylmalate, via the formation of 2-isopropylmaleate. The chain is 3-isopropylmalate dehydratase small subunit from Rhodospirillum rubrum (strain ATCC 11170 / ATH 1.1.1 / DSM 467 / LMG 4362 / NCIMB 8255 / S1).